Reading from the N-terminus, the 404-residue chain is Propionate kinase (404 aa).

Belongs to the acetokinase family. PduW subfamily.

The protein localises to the cytoplasm. It catalyses the reaction propanoate + ATP = propanoyl phosphate + ADP. It functions in the pathway polyol metabolism; 1,2-propanediol degradation. Works with phosphate acetyltransferase (pta) to capture exogenous propionate and regenerate propionyl-CoA during degradation of 1,2-propanediol (1,2-PD). The polypeptide is Propionate kinase (Citrobacter koseri (strain ATCC BAA-895 / CDC 4225-83 / SGSC4696)).